Consider the following 417-residue polypeptide: Odorant receptor 65a (417 aa).

At 1–62 (MTELRSERKN…MNSEQRRLPR (62 aa)) the chain is on the cytoplasmic side. A helical membrane pass occupies residues 63–83 (IVAWQYFVSIQLATALASLFY). Over 84-98 (GISESIGDIVNLGRD) the chain is Extracellular. A helical membrane pass occupies residues 99 to 119 (LVFIITIIFICFRLVFFAQYA). Residues 120-152 (GELDVIIDALEDIYHWSIKGPATKEVQETKRLH) lie on the Cytoplasmic side of the membrane. Residues 153–173 (FLLFMALIITWFSFLILFMLI) form a helical membrane-spanning segment. Over 174-206 (KISTPFWIESQTLPFHVSWPFQLHDPSKHPIAY) the chain is Extracellular. Residues 207-227 (IIIFVSQSTTMLYFLIWLGVV) traverse the membrane as a helical segment. At 228 to 290 (ENMGVSLFFE…TDRCNHIFNG (63 aa)) the chain is on the cytoplasmic side. The helical transmembrane segment at 291–311 (AFIMQMLINFLLVSLSLFEVL) threads the bilayer. Residues 312-316 (AAKKN) lie on the Extracellular side of the membrane. The helical transmembrane segment at 317–337 (PQVAVEYMIIMLMTLGHLSFW) threads the bilayer. The Cytoplasmic segment spans residues 338-393 (SKFGDMFSKESEQVALAVYEAYDPNVGSKSIHRQFCFFIQRAQKPLIMKASPFPPF). The chain crosses the membrane as a helical span at residues 394-414 (NLENYMFILKQCYSILTILAN). Topologically, residues 415–417 (TLE) are extracellular.

The protein belongs to the insect chemoreceptor superfamily. Heteromeric odorant receptor channel (TC 1.A.69) family. Or49a subfamily. Interacts with Orco. Complexes exist early in the endomembrane system in olfactory sensory neurons (OSNs), coupling these complexes to the conserved ciliary trafficking pathway. In terms of tissue distribution, expressed in olfactory sensory neurons in the antenna.

It is found in the cell membrane. In terms of biological role, odorant receptor which mediates acceptance or avoidance behavior, depending on its substrates. The odorant receptor repertoire encodes a large collection of odor stimuli that vary widely in identity, intensity, and duration. May form a complex with Orco to form odorant-sensing units, providing sensitive and prolonged odorant signaling and calcium permeability. Involved in olfactory communication for modulating aggression through the sensing of the male-specific pheromone 11-cis-vaccenyl acetate (cVA). Although acute exposure to cVA elicites aggression through Or67d olfactory receptor neurons (ORNs), chronic cVA exposure reduces aggression through Or65a ORNs. Moreover, cVA leads to generalized learning with mated females. It is a major component of the male cuticular hydrocarbon profile, but it is not found on virgin females. During copulation, cVA is transferred to the female in ejaculate along with sperm and peptides that decrease her sexual receptivity. This Drosophila melanogaster (Fruit fly) protein is Odorant receptor 65a (Or65a).